Consider the following 216-residue polypeptide: ATP-dependent Clp protease proteolytic subunit (216 aa).

Ser109 (nucleophile) is an active-site residue. His134 is a catalytic residue.

Belongs to the peptidase S14 family. As to quaternary structure, fourteen ClpP subunits assemble into 2 heptameric rings which stack back to back to give a disk-like structure with a central cavity, resembling the structure of eukaryotic proteasomes.

The protein localises to the cytoplasm. It catalyses the reaction Hydrolysis of proteins to small peptides in the presence of ATP and magnesium. alpha-casein is the usual test substrate. In the absence of ATP, only oligopeptides shorter than five residues are hydrolyzed (such as succinyl-Leu-Tyr-|-NHMec, and Leu-Tyr-Leu-|-Tyr-Trp, in which cleavage of the -Tyr-|-Leu- and -Tyr-|-Trp bonds also occurs).. Cleaves peptides in various proteins in a process that requires ATP hydrolysis. Has a chymotrypsin-like activity. Plays a major role in the degradation of misfolded proteins. This is ATP-dependent Clp protease proteolytic subunit from Rhodospirillum rubrum (strain ATCC 11170 / ATH 1.1.1 / DSM 467 / LMG 4362 / NCIMB 8255 / S1).